The chain runs to 51 residues: Sperm protamine P1 (51 aa).

It belongs to the protamine P1 family. As to expression, testis.

Its subcellular location is the nucleus. It is found in the chromosome. Protamines substitute for histones in the chromatin of sperm during the haploid phase of spermatogenesis. They compact sperm DNA into a highly condensed, stable and inactive complex. The sequence is that of Sperm protamine P1 (PRM1) from Macaca mulatta (Rhesus macaque).